Consider the following 114-residue polypeptide: Putative antiporter subunit mnhC2 (114 aa).

Helical transmembrane passes span 3–23, 28–48, and 72–92; these read LILL…ILSI, IVIG…SMGT, and AIVL…LVLV.

This sequence belongs to the CPA3 antiporters (TC 2.A.63) subunit C family. As to quaternary structure, may form a heterooligomeric complex that consists of seven subunits: mnhA2, mnhB2, mnhC2, mnhD2, mnhE2, mnhF2 and mnhG2.

Its subcellular location is the cell membrane. The protein is Putative antiporter subunit mnhC2 (mnhC2) of Staphylococcus aureus (strain MRSA252).